Consider the following 597-residue polypeptide: Gamma-terpinene synthase, chloroplastic (597 aa).

The transit peptide at 1–47 (MATLSMQVSILSKQVKNLNSFGMRASKLPMVARRVDVSTTRLRPICS) directs the protein to the chloroplast. Residues Asp-350 and Asp-354 each contribute to the Mn(2+) site. A DDXXD motif motif is present at residues 350–354 (DDVYD). Homodimerization regions lie at residues 356–362 (YGTLDEL) and 428–465 (EAKW…FTLP). The Mn(2+) site is built by Asp-494 and Glu-502.

It belongs to the terpene synthase family. Homodimer. Mn(2+) is required as a cofactor. It depends on Mg(2+) as a cofactor.

The protein resides in the plastid. It localises to the chloroplast. It carries out the reaction (2E)-geranyl diphosphate = gamma-terpinene + diphosphate. Its pathway is secondary metabolite biosynthesis; terpenoid biosynthesis. In terms of biological role, involved in the biosynthesis of phenolic monoterpenes natural products thymol and carvacrol which have a broad range of biological activities acting as antimicrobial compounds, insecticides, antioxidants and pharmaceutical agents. Monoterpene synthase which catalyzes the conversion of geranyl diphosphate (GPP) to gamma-terpinene and minor amounts of other monoterpenes (e.g. alpha-thujene, alpha-terpinene, myrcene, sabinene, (+)-R-limonene, alpha-pinene and alpha-phellandrene). This is Gamma-terpinene synthase, chloroplastic from Thymus caespititius (Cretan thyme).